A 313-amino-acid polypeptide reads, in one-letter code: MLSSSSNRPISAHLTIHYKAIQEEEGEDMRSGAGSGGHHDDYFLESNRSPTPNKKHEFIKTVLNINDNDSEFSESCSPREKLHNEGACNTDLFGDFMSKRQQRLSNSMNIYDLYQCVHNLSPSNNNHQFIARRFSDSHIPSLHHRQQQQKVTTKNFVQPTKDIQRIASYAADSDQRVKYLPNYHQSAPSTALSAAESKAAVPRKLPDRDSTQNYVLKLQLSSPNSQPMSPRTRPGYRPSCSSSNCSSSSSSSACSSVSISDPNNITAYETNNVNPQFPSNQPLDISSPCARHHHRRNSIAVKFDKALYKKTTG.

2 disordered regions span residues 24–53 (EEGEDMRSGAGSGGHHDDYFLESNRSPTPN) and 190–291 (TALS…PCAR). Polar residues predominate over residues 211-229 (TQNYVLKLQLSSPNSQPMS). A compositionally biased stretch (low complexity) spans 239-260 (SCSSSNCSSSSSSSACSSVSIS). Positions 261 to 284 (DPNNITAYETNNVNPQFPSNQPLD) are enriched in polar residues.

This is an uncharacterized protein from Saccharomyces cerevisiae (strain ATCC 204508 / S288c) (Baker's yeast).